The following is a 346-amino-acid chain: LRP2-binding protein (346 aa).

The TPR repeat unit spans residues 58–91 (AMAYFLRGQLYFEEGWYEEALAQFEEIQEKDHQA). 6 Sel1-like repeats span residues 92 to 124 (IYQLGVMYYDGLGTIANAEKGVNYMRKILDSSC), 132 to 167 (FAAAYNLGRAYFEGKGVKRSDEEAERLWLLAADNGN), 172 to 205 (VKAQSILGLFYSMKEPKELEKAFFWHSEACGNGS), 206 to 241 (LESQGALGLMYFYGQGIRQDTDAALHCLREAAERGN), 242 to 276 (VYAQGTLVEYYYKMKFFTKCVSFSKRIADYDEVHD), and 296 to 331 (AMAAFYHGRCLQLGLGIMKDEESAKHYYSKACRLNP).

As to quaternary structure, interacts with LRP2.

The protein resides in the cytoplasm. May act as an adapter that regulates LRP2 function. This Mus musculus (Mouse) protein is LRP2-binding protein (Lrp2bp).